The sequence spans 368 residues: MEGLVFLNALATRLLFLLHSLVGVWRVTEVKKEPRYWLLALLNLLLFLETALTLKFKRGRGYKWFSPAIFLYLISIVPSLWLLELHHETQYCSIQAEGTSQNTSRKEDFNQTLTSNEQTSRADDLIETAKVFVNNLSTVCEKVWTLGLHQTFLLMLIIGRWLLPIGGGITRDQLSQLLLMFVGTAADILEFTSETLEEQNVRNSPALVYAILVIWTWSMLQFPLDLAVQNVVCPVSVTERGFPSLFFCQYSADLWNIGISVFIQDGPFLVVRLILMTYFKVINQMLVFFAAKNFLVVVLQLYRLVVLALAVRASLRSQSEGLKGEHGCRAQTSESGPSQRDWQNESKEGLAIPLRGSPVTSDDSHHTP.

The next 3 helical transmembrane spans lie at 4–24, 36–56, and 65–85; these read LVFL…LVGV, YWLL…TLKF, and FSPA…LLEL. Asn-110 carries an N-linked (GlcNAc...) asparagine glycan. Helical transmembrane passes span 150-170, 177-197, 208-228, 257-277, and 281-301; these read QTFL…GGIT, LLLM…ETLE, VYAI…DLAV, IGIS…ILMT, and VINQ…VLQL. The interval 324–368 is disordered; it reads GEHGCRAQTSESGPSQRDWQNESKEGLAIPLRGSPVTSDDSHHTP. Residues 330 to 341 are compositionally biased toward polar residues; that stretch reads AQTSESGPSQRD.

The protein localises to the membrane. This Homo sapiens (Human) protein is Transmembrane protein 26 (TMEM26).